A 469-amino-acid polypeptide reads, in one-letter code: Sulfate adenylyltransferase subunit 1 (469 aa).

The region spanning 22 to 238 is the tr-type G domain; that stretch reads KQLLRFITCG…LETIKIDEDR (217 aa). The tract at residues 31–38 is G1; it reads GSVDDGKS. 31 to 38 is a GTP binding site; the sequence is GSVDDGKS. The tract at residues 89-93 is G2; sequence GITID. Positions 110 to 113 are G3; it reads DTPG. Residues 110 to 114 and 165 to 168 each bind GTP; these read DTPGH and NKMD. Residues 165–168 are G4; sequence NKMD. The interval 203–205 is G5; it reads SAL.

This sequence belongs to the TRAFAC class translation factor GTPase superfamily. Classic translation factor GTPase family. CysN/NodQ subfamily. In terms of assembly, heterodimer composed of CysD, the smaller subunit, and CysN.

It catalyses the reaction sulfate + ATP + H(+) = adenosine 5'-phosphosulfate + diphosphate. It functions in the pathway sulfur metabolism; hydrogen sulfide biosynthesis; sulfite from sulfate: step 1/3. In terms of biological role, with CysD forms the ATP sulfurylase (ATPS) that catalyzes the adenylation of sulfate producing adenosine 5'-phosphosulfate (APS) and diphosphate, the first enzymatic step in sulfur assimilation pathway. APS synthesis involves the formation of a high-energy phosphoric-sulfuric acid anhydride bond driven by GTP hydrolysis by CysN coupled to ATP hydrolysis by CysD. The protein is Sulfate adenylyltransferase subunit 1 of Aliarcobacter butzleri (strain RM4018) (Arcobacter butzleri).